The following is a 573-amino-acid chain: Putative ferric-chelate reductase 1 (573 aa).

Residues 4–24 traverse the membrane as a helical segment; sequence VCKSPQRLLFVLVSCFGLVQS. Residues 15-181 enclose the Reelin domain; the sequence is LVSCFGLVQS…GTTGTSTTPA (167 aa). A DOMON domain is found at 213 to 328; sequence GCYFVAVQAS…NEYYLMIAAG (116 aa). 2 N-linked (GlcNAc...) asparagine glycosylation sites follow: Asn286 and Asn300. The Cytochrome b561 domain occupies 332–532; the sequence is QGNIQFHTNK…YILQDLNLRA (201 aa). The chain crosses the membrane as a helical span at residues 369 to 389; that stretch reads AHGCLMLISWMATGSIGMIIA. His370 and His411 together coordinate heme b. The next 2 helical transmembrane spans lie at 414-434 and 441-461; these read LMTLSIIATAIAFIIVFVSAG and HPVLGCLVMILSLIQPIVAAF. Residues His441 and His477 each coordinate heme b. Helical transmembrane passes span 479-499, 506-526, and 550-570; these read CNAFAIKCLAVAAIFTGLALF, GWMLKVMGGYLAWEALMYILQ, and ILLFLFIIGNLAFLIALLVGI.

The protein belongs to the FRRS1 family. Heme b serves as cofactor.

The protein localises to the membrane. Putative ferric-chelate reductases reduce Fe(3+) to Fe(2+) before its transport from the endosome to the cytoplasm. The chain is Putative ferric-chelate reductase 1 (frrs1) from Danio rerio (Zebrafish).